We begin with the raw amino-acid sequence, 705 residues long: Probable cyclic nucleotide-gated ion channel 16 (705 aa).

The Cytoplasmic segment spans residues 1–57 (MSNLHLYTSARFRNFPTTFSLRHHHNDPNNQRRRSIFSKLRDKTLDPGGDLITRWNH). A helical transmembrane segment spans residues 58-78 (IFLITCLLALFLDPLYFYLPI). The Extracellular segment spans residues 79–91 (VQAGTACMSIDVR). Residues 92–112 (FGIFVTCFRNLADLSFLIHIL) traverse the membrane as a helical segment. Residues 113 to 147 (LKFKTAFVSKSSRVFGRGELVMDRREIAIRYLKSE) are Cytoplasmic-facing. A helical membrane pass occupies residues 148 to 168 (FVIDLAATLPLPQIMIWFVIP). Residues 169–180 (NAGEFRYAAHQN) lie on the Extracellular side of the membrane. The chain crosses the membrane as a helical span at residues 181–201 (HTLSLIVLIQYVPRFLVMLPL). The Cytoplasmic portion of the chain corresponds to 202–222 (NRRIIKATGVAAKTAWSGAAY). The helical transmembrane segment at 223-243 (NLILYLLVSHVLGSVWYVLSI) threads the bilayer. At 244–353 (QRQHECWRRE…LAASTLSSET (110 aa)) the chain is on the extracellular side. The chain crosses the membrane as a helical span at residues 354 to 374 (IFSCFICVAGLVFFSHLIGNV). Residues 375 to 705 (QNYLQSTTAR…MFKPEDPGFF (331 aa)) are Cytoplasmic-facing. A nucleoside 3',5'-cyclic phosphate-binding positions include 457 to 580 (FFAQ…HSKK) and Glu-528. The calmodulin-binding stretch occupies residues 573–588 (FRRLHSKKLQHAFRYY). Positions 593-622 (RAWGTCFIQAAWRRYMKRKLAMELARQEEE) constitute an IQ domain. Disordered stretches follow at residues 636-655 (EEDMPESNNNNGDENSSNNQ) and 672-705 (RGVLGNQRGSTRIDPDHPTLKMPKMFKPEDPGFF). The segment covering 642–655 (SNNNNGDENSSNNQ) has biased composition (low complexity).

Belongs to the cyclic nucleotide-gated cation channel (TC 1.A.1.5) family. In terms of assembly, homotetramer or heterotetramer.

The protein resides in the cell membrane. Its function is as follows. Putative cyclic nucleotide-gated ion channel. This Arabidopsis thaliana (Mouse-ear cress) protein is Probable cyclic nucleotide-gated ion channel 16 (CNGC16).